A 514-amino-acid chain; its full sequence is Pentatricopeptide repeat-containing protein At4g26800 (514 aa).

PPR repeat units follow at residues Asp-122–Pro-156, Asp-157–Arg-191, Asp-192–Pro-226, Asn-227–Pro-261, Asn-262–Pro-296, Asn-297–Pro-331, Asn-332–Ala-366, Asn-367–Pro-401, Asn-402–Leu-436, Asp-437–Pro-471, and Asp-472–Pro-510.

This sequence belongs to the PPR family. P subfamily.

The polypeptide is Pentatricopeptide repeat-containing protein At4g26800 (Arabidopsis thaliana (Mouse-ear cress)).